The sequence spans 543 residues: MARYIFITGGVVSSLGKGLASAALGALLQARGYKVRLRKLDPYLNLDPGTMSPYQHGEVFVTDDGAETDLDLGHYERFTGRPATKQDNITTGRIYQDILTKERRGDYLGATIQVVPHVTNAIKEFIVSDNDGYDFVLVEIGGTVGDIEGLPFFEAIRQIKNDLPRGDVIYIHLTLLPYIPSAGELKTKPTQHSVKELRSIGIQPDILLCRTDRPIPKEERRKLGLFCNVRESAVIEARDADSIYAVPEAYHAAGLDDEVLAAFAIAAKEPPQLGRWHEINERIRNPEGAVTIAIVGKYTGMKDAYKSLIEALSHGGIANKVQVKLDWIESEVFENEDPAPFLEHVNGILVPGGFGQRGAEGKIEAARFARERNVPYFGICFGMQMAVIEAARNLAGIEQANSTEFGPTPEPLVGLMTEWVRGNELEKRSQAGDLGGTMRLGAYPATLKRGSRVSQVYGGVTEISERHRHRYEVNTAYKDRLEQHGLKFSGMSPDGVLPEIVEYEDHPWFIGVQFHPELKSRPFDPHPLFASFVQAALVQSRLV.

The tract at residues 1 to 265 (MARYIFITGG…DDEVLAAFAI (265 aa)) is amidoligase domain. Ser13 contributes to the CTP binding site. Residue Ser13 coordinates UTP. 14–19 (SLGKGL) serves as a coordination point for ATP. Residue Tyr54 coordinates L-glutamine. Asp71 lines the ATP pocket. Positions 71 and 139 each coordinate Mg(2+). CTP is bound by residues 146–148 (DIE), 186–191 (KTKPTQ), and Lys222. UTP contacts are provided by residues 186–191 (KTKPTQ) and Lys222. Residue 238–240 (RDA) coordinates ATP. A Glutamine amidotransferase type-1 domain is found at 291–542 (TIAIVGKYTG…VQAALVQSRL (252 aa)). An L-glutamine-binding site is contributed by Gly353. The Nucleophile; for glutamine hydrolysis role is filled by Cys380. Residues 381 to 384 (FGMQ), Glu404, and Arg470 contribute to the L-glutamine site. Residues His515 and Glu517 contribute to the active site.

The protein belongs to the CTP synthase family. In terms of assembly, homotetramer.

It carries out the reaction UTP + L-glutamine + ATP + H2O = CTP + L-glutamate + ADP + phosphate + 2 H(+). The enzyme catalyses L-glutamine + H2O = L-glutamate + NH4(+). It catalyses the reaction UTP + NH4(+) + ATP = CTP + ADP + phosphate + 2 H(+). It participates in pyrimidine metabolism; CTP biosynthesis via de novo pathway; CTP from UDP: step 2/2. With respect to regulation, allosterically activated by GTP, when glutamine is the substrate; GTP has no effect on the reaction when ammonia is the substrate. The allosteric effector GTP functions by stabilizing the protein conformation that binds the tetrahedral intermediate(s) formed during glutamine hydrolysis. Inhibited by the product CTP, via allosteric rather than competitive inhibition. Its function is as follows. Catalyzes the ATP-dependent amination of UTP to CTP with either L-glutamine or ammonia as the source of nitrogen. Regulates intracellular CTP levels through interactions with the four ribonucleotide triphosphates. This is CTP synthase from Rhodopseudomonas palustris (strain ATCC BAA-98 / CGA009).